A 355-amino-acid chain; its full sequence is Probable nitronate monooxygenase (355 aa).

Residues Asn-71, Gln-175, Gly-180, Gly-218, and 237–240 (QMGT) each bind FMN.

The protein belongs to the nitronate monooxygenase family. NMO class I subfamily. It depends on FMN as a cofactor.

It catalyses the reaction 3 propionate 3-nitronate + 3 O2 + H2O = 3 3-oxopropanoate + 2 nitrate + nitrite + H2O2 + 3 H(+). In terms of biological role, nitronate monooxygenase that uses molecular oxygen to catalyze the oxidative denitrification of alkyl nitronates. Acts on propionate 3-nitronate (P3N), the presumed physiological substrate. Probably functions in the detoxification of P3N, a metabolic poison produced by plants and fungi as a defense mechanism. The chain is Probable nitronate monooxygenase from Staphylococcus aureus (strain MSSA476).